A 325-amino-acid chain; its full sequence is L-lactate dehydrogenase (325 aa).

NAD(+) is bound by residues V21, D42, K47, Y73, and 87-88 (GA). Substrate is bound by residues Q90, R96, and 128–131 (NPVD). Residues 126–128 (ATN) and S151 contribute to the NAD(+) site. Position 156 to 159 (156 to 159 (DTAR)) interacts with substrate. Beta-D-fructose 1,6-bisphosphate is bound by residues R161 and H176. H183 serves as the catalytic Proton acceptor. The residue at position 228 (Y228) is a Phosphotyrosine. T237 provides a ligand contact to substrate.

This sequence belongs to the LDH/MDH superfamily. LDH family. Homotetramer.

It is found in the cytoplasm. The catalysed reaction is (S)-lactate + NAD(+) = pyruvate + NADH + H(+). It participates in fermentation; pyruvate fermentation to lactate; (S)-lactate from pyruvate: step 1/1. With respect to regulation, allosterically activated by fructose 1,6-bisphosphate (FBP). Catalyzes the conversion of lactate to pyruvate. The polypeptide is L-lactate dehydrogenase (Shouchella clausii (strain KSM-K16) (Alkalihalobacillus clausii)).